Reading from the N-terminus, the 89-residue chain is Putative membrane protein insertion efficiency factor (89 aa).

This sequence belongs to the UPF0161 family.

The protein localises to the cell inner membrane. In terms of biological role, could be involved in insertion of integral membrane proteins into the membrane. This chain is Putative membrane protein insertion efficiency factor, found in Petrotoga mobilis (strain DSM 10674 / SJ95).